We begin with the raw amino-acid sequence, 299 residues long: MSQDPILTSKGSQEEEDFFGLDNFFPEPESPLPPPFSFASYDIPANIDFYVPDHRKSLILRLVGSHPLWGHHLWNTARTLSTYLLETPQITQSRHVLELGAGAGLPSIVCVLAGSSKVIVTDYSDEGLLDNLRFNVDVNLEGEEKERIAVDGHVWGQSVDPLLGHLPKGQKYDLLILSDLVFNHSQHDALIKTVEATLTSSSTQSYDPSNPSAPLTEPSILVFFTHHRPHLAHADMAFFPRLAESGNGWAYEKVVEEWAGAMFENDPGDKKVRGTVHGWRAWRVRDGEERGEKPSRISL.

Residues tryptophan 74, 100–102 (GAG), aspartate 122, tryptophan 155, and serine 178 contribute to the S-adenosyl-L-methionine site.

The protein belongs to the class I-like SAM-binding methyltransferase superfamily. EFM7 family.

Its subcellular location is the cytoplasm. Its function is as follows. S-adenosyl-L-methionine-dependent protein methyltransferase that trimethylates the N-terminal glycine 'Gly-2' of elongation factor 1-alpha, before also catalyzing the mono- and dimethylation of 'Lys-3'. This is Protein N-terminal and lysine N-methyltransferase EFM7 from Cryptococcus neoformans var. neoformans serotype D (strain B-3501A) (Filobasidiella neoformans).